We begin with the raw amino-acid sequence, 425 residues long: UDP-N-acetylglucosamine 1-carboxyvinyltransferase (425 aa).

Residue 25-26 coordinates phosphoenolpyruvate; sequence KN. Arg-95 is a UDP-N-acetyl-alpha-D-glucosamine binding site. Cys-119 (proton donor) is an active-site residue. Position 119 is a 2-(S-cysteinyl)pyruvic acid O-phosphothioketal (Cys-119). UDP-N-acetyl-alpha-D-glucosamine is bound by residues 124–128, Asp-306, and Ile-328; that span reads RPVDQ.

The protein belongs to the EPSP synthase family. MurA subfamily.

It localises to the cytoplasm. The catalysed reaction is phosphoenolpyruvate + UDP-N-acetyl-alpha-D-glucosamine = UDP-N-acetyl-3-O-(1-carboxyvinyl)-alpha-D-glucosamine + phosphate. The protein operates within cell wall biogenesis; peptidoglycan biosynthesis. Functionally, cell wall formation. Adds enolpyruvyl to UDP-N-acetylglucosamine. This chain is UDP-N-acetylglucosamine 1-carboxyvinyltransferase, found in Thermus thermophilus (strain ATCC BAA-163 / DSM 7039 / HB27).